A 308-amino-acid chain; its full sequence is Isoflavone reductase-like protein (308 aa).

NADP(+) is bound by residues 11–17 (GGTGYIG), Arg-36, and Lys-45. Catalysis depends on Lys-133, which acts as the Proton acceptor. Arg-137 contacts NADP(+).

This sequence belongs to the NmrA-type oxidoreductase family. Isoflavone reductase subfamily. Homodimer.

Its subcellular location is the cytoplasm. This Olea europaea (Common olive) protein is Isoflavone reductase-like protein.